A 133-amino-acid chain; its full sequence is Large-conductance mechanosensitive channel (133 aa).

A run of 2 helical transmembrane segments spans residues 10–30 and 76–96; these read FAMKGNVLDMAVGVVIGTAFG and GNFIQTAVDFLIIAFCIFCVI.

It belongs to the MscL family. Homopentamer.

The protein localises to the cell inner membrane. In terms of biological role, channel that opens in response to stretch forces in the membrane lipid bilayer. May participate in the regulation of osmotic pressure changes within the cell. This is Large-conductance mechanosensitive channel from Campylobacter curvus (strain 525.92).